The chain runs to 944 residues: Translation initiation factor IF-2 (944 aa).

Disordered stretches follow at residues 61 to 157 and 173 to 281; these read IQAN…KAKQ and TQSN…SHKI. The span at 132–150 shows a compositional bias: polar residues; sequence TFENQTPPTENTPKVVSHS. Positions 175–185 are enriched in low complexity; sequence SNANNASNANN. Positions 186–203 are enriched in basic and acidic residues; that stretch reads AKKEISEVKKQEQEIKRH. Over residues 204–215 the composition is skewed to basic residues; that stretch reads ENIKRRTGFRVI. The segment covering 244–259 has biased composition (basic and acidic residues); the sequence is EDIKKEWQEKDKQEAK. The region spanning 443–612 is the tr-type G domain; the sequence is ERPPVVTIMG…LIQAGIMELK (170 aa). The tract at residues 452–459 is G1; the sequence is GHVDHGKT. GTP is bound at residue 452–459; that stretch reads GHVDHGKT. Residues 477–481 form a G2 region; sequence GITQH. Residues 498–501 are G3; the sequence is DTPG. Residues 498-502 and 552-555 each bind GTP; these read DTPGH and NKMD. Residues 552-555 form a G4 region; sequence NKMD. Residues 588 to 590 are G5; sequence SAK.

It belongs to the TRAFAC class translation factor GTPase superfamily. Classic translation factor GTPase family. IF-2 subfamily.

It localises to the cytoplasm. Functionally, one of the essential components for the initiation of protein synthesis. Protects formylmethionyl-tRNA from spontaneous hydrolysis and promotes its binding to the 30S ribosomal subunits. Also involved in the hydrolysis of GTP during the formation of the 70S ribosomal complex. In Helicobacter pylori (strain ATCC 700392 / 26695) (Campylobacter pylori), this protein is Translation initiation factor IF-2 (infB).